We begin with the raw amino-acid sequence, 828 residues long: Glycerol-3-phosphate acyltransferase 1, mitochondrial (828 aa).

At 1–87 (MDESALTLGT…FFNPSIPSLG (87 aa)) the chain is on the cytoplasmic side. Positions 80 to 120 (NPSIPSLGLRNVIYINETHTRHRGWLARRLSYVLFIQERDV) are important for mitochondrial localization. An intramembrane segment occupies 88-118 (LRNVIYINETHTRHRGWLARRLSYVLFIQER). At 119–828 (DVHKGMFATN…LEYILSFVVL (710 aa)) the chain is on the cytoplasmic side. The HXXXXD motif signature appears at 230 to 235 (HRSHID). The CoA site is built by Arg-278, Arg-279, Lys-288, Arg-293, and Arg-328. Ser-380 bears the Phosphoserine mark. Positions 435-455 (SRPSDAADEGRDTSINESRNA) are disordered. Basic and acidic residues predominate over residues 442–455 (DEGRDTSINESRNA). Arg-462 is a binding site for CoA. Ser-688 and Ser-695 each carry phosphoserine. An N6-acetyllysine mark is found at Lys-780 and Lys-784.

It belongs to the GPAT/DAPAT family.

It is found in the mitochondrion outer membrane. It carries out the reaction sn-glycerol 3-phosphate + an acyl-CoA = a 1-acyl-sn-glycero-3-phosphate + CoA. It catalyses the reaction (9Z,12Z)-octadecadienoyl-CoA + sn-glycerol 3-phosphate = 1-(9Z,12Z)-octadecadienoyl-sn-glycero-3-phosphate + CoA. The catalysed reaction is sn-glycerol 3-phosphate + (9Z)-octadecenoyl-CoA = 1-(9Z-octadecenoyl)-sn-glycero-3-phosphate + CoA. The enzyme catalyses sn-glycerol 3-phosphate + octadecanoyl-CoA = 1-octadecanoyl-sn-glycero-3-phosphate + CoA. It carries out the reaction sn-glycerol 3-phosphate + hexadecanoyl-CoA = 1-hexadecanoyl-sn-glycero-3-phosphate + CoA. It catalyses the reaction dodecanoyl-CoA + sn-glycerol 3-phosphate = 1-dodecanoyl-sn-glycerol 3-phosphate + CoA. The catalysed reaction is 1-acyl-sn-glycero-3-phospho-(1'-sn-glycerol) + an acyl-CoA = a 1,2-diacyl-sn-glycero-3-phospho-(1'-sn-glycerol) + CoA. It functions in the pathway phospholipid metabolism; CDP-diacylglycerol biosynthesis; CDP-diacylglycerol from sn-glycerol 3-phosphate: step 1/3. Its function is as follows. Mitochondrial membrane protein that catalyzes the essential first step of biosynthesis of glycerolipids such as triglycerides, phosphatidic acids and lysophosphatidic acids. Esterifies acyl-group from acyl-coenzyme A (acyl-CoA) to the sn-1 position of glycerol-3-phosphate, to produce lysophosphatidic acid. Has a narrow hydrophobic binding cleft that selects for a linear acyl chain. Catalytic activity is higher for substrates with a 16-carbon acyl chain. The sequence is that of Glycerol-3-phosphate acyltransferase 1, mitochondrial from Homo sapiens (Human).